A 160-amino-acid polypeptide reads, in one-letter code: Cyclic pyranopterin monophosphate synthase (160 aa).

Residues 77-79 (MCH) and 114-115 (ME) each bind substrate. D129 is a catalytic residue.

Belongs to the MoaC family. As to quaternary structure, homohexamer; trimer of dimers.

The enzyme catalyses (8S)-3',8-cyclo-7,8-dihydroguanosine 5'-triphosphate = cyclic pyranopterin phosphate + diphosphate. The protein operates within cofactor biosynthesis; molybdopterin biosynthesis. In terms of biological role, catalyzes the conversion of (8S)-3',8-cyclo-7,8-dihydroguanosine 5'-triphosphate to cyclic pyranopterin monophosphate (cPMP). The protein is Cyclic pyranopterin monophosphate synthase of Listeria monocytogenes serovar 1/2a (strain ATCC BAA-679 / EGD-e).